A 573-amino-acid chain; its full sequence is Eukaryotic translation initiation factor 3 subunit D (573 aa).

Positions 111 to 162 (VFTRGGRGQRGARGTERGGRAQLSRGRGGQYGGGYDRGGRSAAGGRGGRRFG) are disordered. Residues 136–156 (GRGGQYGGGYDRGGRSAAGGR) are compositionally biased toward gly residues. Positions 301 to 315 (ALDMVTVNENAVDAP) are RNA gate. Residues 552-573 (PAGGLDEEEDNGDLGQEEDDEE) are disordered. The span at 556-573 (LDEEEDNGDLGQEEDDEE) shows a compositional bias: acidic residues.

The protein belongs to the eIF-3 subunit D family. In terms of assembly, component of the eukaryotic translation initiation factor 3 (eIF-3) complex.

The protein resides in the cytoplasm. In terms of biological role, mRNA cap-binding component of the eukaryotic translation initiation factor 3 (eIF-3) complex, which is involved in protein synthesis of a specialized repertoire of mRNAs and, together with other initiation factors, stimulates binding of mRNA and methionyl-tRNAi to the 40S ribosome. The eIF-3 complex specifically targets and initiates translation of a subset of mRNAs involved in cell proliferation. In the eIF-3 complex, eif3d specifically recognizes and binds the 7-methylguanosine cap of a subset of mRNAs. The protein is Eukaryotic translation initiation factor 3 subunit D of Pyricularia oryzae (strain 70-15 / ATCC MYA-4617 / FGSC 8958) (Rice blast fungus).